A 297-amino-acid chain; its full sequence is ATP synthase gamma chain (297 aa).

The protein belongs to the ATPase gamma chain family. In terms of assembly, F-type ATPases have 2 components, CF(1) - the catalytic core - and CF(0) - the membrane proton channel. CF(1) has five subunits: alpha(3), beta(3), gamma(1), delta(1), epsilon(1). CF(0) has three main subunits: a, b and c.

The protein localises to the cell membrane. Functionally, produces ATP from ADP in the presence of a proton gradient across the membrane. The gamma chain is believed to be important in regulating ATPase activity and the flow of protons through the CF(0) complex. The chain is ATP synthase gamma chain from Beutenbergia cavernae (strain ATCC BAA-8 / DSM 12333 / CCUG 43141 / JCM 11478 / NBRC 16432 / NCIMB 13614 / HKI 0122).